We begin with the raw amino-acid sequence, 236 residues long: Ubiquinone biosynthesis O-methyltransferase (236 aa).

Arg39, Gly59, Asp80, and Met124 together coordinate S-adenosyl-L-methionine.

The protein belongs to the methyltransferase superfamily. UbiG/COQ3 family.

The enzyme catalyses a 3-demethylubiquinol + S-adenosyl-L-methionine = a ubiquinol + S-adenosyl-L-homocysteine + H(+). It catalyses the reaction a 3-(all-trans-polyprenyl)benzene-1,2-diol + S-adenosyl-L-methionine = a 2-methoxy-6-(all-trans-polyprenyl)phenol + S-adenosyl-L-homocysteine + H(+). It functions in the pathway cofactor biosynthesis; ubiquinone biosynthesis. In terms of biological role, O-methyltransferase that catalyzes the 2 O-methylation steps in the ubiquinone biosynthetic pathway. The sequence is that of Ubiquinone biosynthesis O-methyltransferase from Shewanella baltica (strain OS223).